A 180-amino-acid polypeptide reads, in one-letter code: NAD(P)H-quinone oxidoreductase subunit I, chloroplastic (180 aa).

4Fe-4S ferredoxin-type domains follow at residues 55–84 (GRIH…VDWR) and 95–124 (LNYS…MTEE). Positions 64, 67, 70, 74, 104, 107, 110, and 114 each coordinate [4Fe-4S] cluster.

It belongs to the complex I 23 kDa subunit family. NDH is composed of at least 16 different subunits, 5 of which are encoded in the nucleus. [4Fe-4S] cluster is required as a cofactor.

It is found in the plastid. Its subcellular location is the chloroplast thylakoid membrane. The enzyme catalyses a plastoquinone + NADH + (n+1) H(+)(in) = a plastoquinol + NAD(+) + n H(+)(out). It carries out the reaction a plastoquinone + NADPH + (n+1) H(+)(in) = a plastoquinol + NADP(+) + n H(+)(out). Its function is as follows. NDH shuttles electrons from NAD(P)H:plastoquinone, via FMN and iron-sulfur (Fe-S) centers, to quinones in the photosynthetic chain and possibly in a chloroplast respiratory chain. The immediate electron acceptor for the enzyme in this species is believed to be plastoquinone. Couples the redox reaction to proton translocation, and thus conserves the redox energy in a proton gradient. The polypeptide is NAD(P)H-quinone oxidoreductase subunit I, chloroplastic (Oryza nivara (Indian wild rice)).